A 79-amino-acid chain; its full sequence is Sulfur carrier protein TusA (79 aa).

C15 (cysteine persulfide intermediate) is an active-site residue.

This sequence belongs to the sulfur carrier protein TusA family. In terms of assembly, interacts with IscS.

Its subcellular location is the cytoplasm. It participates in tRNA modification. Sulfur carrier protein involved in sulfur trafficking in the cell. Part of a sulfur-relay system required for 2-thiolation during synthesis of 2-thiouridine of the modified wobble base 5-methylaminomethyl-2-thiouridine (mnm(5)s(2)U) in tRNA. Interacts with IscS and stimulates its cysteine desulfurase activity. Accepts an activated sulfur from IscS, which is then transferred to TusD, and thus determines the direction of sulfur flow from IscS to 2-thiouridine formation. Also appears to be involved in sulfur transfer for the biosynthesis of molybdopterin. This is Sulfur carrier protein TusA from Buchnera aphidicola subsp. Baizongia pistaciae (strain Bp).